Reading from the N-terminus, the 480-residue chain is G-protein coupled receptor seb-2 (480 aa).

Topologically, residues 1-222 (MNPSISTAGA…CMSNGDVEAR (222 aa)) are extracellular. A glycan (N-linked (GlcNAc...) asparagine) is linked at Asn-95. A helical membrane pass occupies residues 223-243 (ILAGLLTYSASVIFLIPAVFL). The Cytoplasmic segment spans residues 244 to 261 (LTLLRPIRCQPMFILHRH). The helical transmembrane segment at 262–282 (LLISCLLYGAFYLITVSLFVV) threads the bilayer. Residues 283-305 (NDAPLSSQVFQNHLFCRLLFSIQ) are Extracellular-facing. Residues 306–328 (LRYLRLTNFTWMLAEAVYLWRLL) form a helical membrane-spanning segment. The Cytoplasmic segment spans residues 329 to 343 (HTAQHSEGETLRSYK). Residues 344 to 364 (VICWGVPGVITVVYIFVRSLN) traverse the membrane as a helical segment. At 365–386 (DDVGMCWIENSTVAWIEWMIIT) the chain is on the extracellular side. A helical membrane pass occupies residues 387 to 407 (PSLLAMGVNLLLLGLIVYILV). Residues 408-423 (KKLRCDPHLERIQYRK) are Cytoplasmic-facing. A helical membrane pass occupies residues 424-444 (AVRGALMLIPVFGVQQLLTIY). Topologically, residues 445 to 480 (RFRNVCLIYRLLHKSFCRRMCSEILVITSGEAGSRS) are extracellular.

It belongs to the G-protein coupled receptor 2 family. Present in the head body-wall muscles from the L1 larval stage through to adulthood. Also expressed between L4 and the adult molt in vulval vm1 muscle cells. These cells play a role in opening the vulva during egg laying.

It is found in the cell membrane. Not known. Putative receptor. The protein is G-protein coupled receptor seb-2 of Caenorhabditis elegans.